Reading from the N-terminus, the 152-residue chain is Large ribosomal subunit protein bL9 (152 aa).

This sequence belongs to the bacterial ribosomal protein bL9 family.

Binds to the 23S rRNA. The chain is Large ribosomal subunit protein bL9 from Streptococcus thermophilus (strain ATCC BAA-491 / LMD-9).